The following is a 374-amino-acid chain: Glutamate 5-kinase (374 aa).

An ATP-binding site is contributed by K8. Substrate is bound by residues S49, D136, and N148. ATP contacts are provided by residues 168–169 (TD) and 211–217 (TGGMQTK). Positions 276–354 (QGILTLDDGA…TQIRQILGYG (79 aa)) constitute a PUA domain.

It belongs to the glutamate 5-kinase family.

The protein resides in the cytoplasm. The catalysed reaction is L-glutamate + ATP = L-glutamyl 5-phosphate + ADP. Its pathway is amino-acid biosynthesis; L-proline biosynthesis; L-glutamate 5-semialdehyde from L-glutamate: step 1/2. Functionally, catalyzes the transfer of a phosphate group to glutamate to form L-glutamate 5-phosphate. This chain is Glutamate 5-kinase, found in Picosynechococcus sp. (strain ATCC 27264 / PCC 7002 / PR-6) (Agmenellum quadruplicatum).